The following is an 817-amino-acid chain: Myosin-A (817 aa).

A Phosphoserine modification is found at Ser-19. Positions 97-771 (MSFGDIGLLN…GAKMLSKIQR (675 aa)) constitute a Myosin motor domain. ATP is bound at residue 191 to 198 (GESGAGKT). The segment at 661 to 671 (PHFIRCIKPNE) is actin-binding. The tail stretch occupies residues 773 to 817 (KLVEWENCVSVIEAAIMKYKHKQNVENNVSSLMRVQAHIRKRMVA).

This sequence belongs to the TRAFAC class myosin-kinesin ATPase superfamily. Myosin family. Interacts with ACT1.

Its subcellular location is the cell membrane. Its function is as follows. Myosins are actin-based motor molecules with ATPase activity. Unconventional myosins serve in intracellular movements. Their highly divergent tails are presumed to bind to membranous compartments, which would be moved relative to actin filaments. In Plasmodium yoelii yoelii, this protein is Myosin-A.